A 274-amino-acid chain; its full sequence is tRNA-cytidine(32) 2-sulfurtransferase (274 aa).

A PP-loop motif motif is present at residues 40 to 45 (SGGKDS). [4Fe-4S] cluster is bound by residues Cys115, Cys118, and Cys206.

Belongs to the TtcA family. In terms of assembly, homodimer. It depends on Mg(2+) as a cofactor. Requires [4Fe-4S] cluster as cofactor.

The protein resides in the cytoplasm. It catalyses the reaction cytidine(32) in tRNA + S-sulfanyl-L-cysteinyl-[cysteine desulfurase] + AH2 + ATP = 2-thiocytidine(32) in tRNA + L-cysteinyl-[cysteine desulfurase] + A + AMP + diphosphate + H(+). It functions in the pathway tRNA modification. In terms of biological role, catalyzes the ATP-dependent 2-thiolation of cytidine in position 32 of tRNA, to form 2-thiocytidine (s(2)C32). The sulfur atoms are provided by the cysteine/cysteine desulfurase (IscS) system. The polypeptide is tRNA-cytidine(32) 2-sulfurtransferase (Stutzerimonas stutzeri (strain A1501) (Pseudomonas stutzeri)).